Here is a 24-residue protein sequence, read N- to C-terminus: Coenzyme PQQ synthesis protein A (24 aa).

Positions 16 to 20 (EVTMY) form a cross-link, pyrroloquinoline quinone (Glu-Tyr).

It belongs to the PqqA family.

It participates in cofactor biosynthesis; pyrroloquinoline quinone biosynthesis. Functionally, required for coenzyme pyrroloquinoline quinone (PQQ) biosynthesis. PQQ is probably formed by cross-linking a specific glutamate to a specific tyrosine residue and excising these residues from the peptide. The chain is Coenzyme PQQ synthesis protein A from Methylococcus capsulatus (strain ATCC 33009 / NCIMB 11132 / Bath).